A 299-amino-acid chain; its full sequence is Sulfate adenylyltransferase subunit 2 (299 aa).

This sequence belongs to the PAPS reductase family. CysD subfamily. Sulfate-activating enzymes, NodP and NodQ, may be physically associated.

The enzyme catalyses sulfate + ATP + H(+) = adenosine 5'-phosphosulfate + diphosphate. Functionally, proposed to provide activated sulfate for transfer to nod factor. In Rhizobium meliloti (strain 1021) (Ensifer meliloti), this protein is Sulfate adenylyltransferase subunit 2 (nodP).